The chain runs to 498 residues: Glycerol kinase (498 aa).

T11 lines the ADP pocket. 3 residues coordinate ATP: T11, S12, and S13. T11 contacts sn-glycerol 3-phosphate. Residue R15 coordinates ADP. R81, E82, Y133, and D242 together coordinate sn-glycerol 3-phosphate. The glycerol site is built by R81, E82, Y133, D242, and Q243. Residues T264 and G307 each coordinate ADP. Positions 264, 307, 311, and 408 each coordinate ATP. Residues G408 and N412 each coordinate ADP.

This sequence belongs to the FGGY kinase family.

The catalysed reaction is glycerol + ATP = sn-glycerol 3-phosphate + ADP + H(+). It participates in polyol metabolism; glycerol degradation via glycerol kinase pathway; sn-glycerol 3-phosphate from glycerol: step 1/1. With respect to regulation, inhibited by fructose 1,6-bisphosphate (FBP). In terms of biological role, key enzyme in the regulation of glycerol uptake and metabolism. Catalyzes the phosphorylation of glycerol to yield sn-glycerol 3-phosphate. The polypeptide is Glycerol kinase (Ralstonia nicotianae (strain ATCC BAA-1114 / GMI1000) (Ralstonia solanacearum)).